We begin with the raw amino-acid sequence, 172 residues long: Myosin regulatory light chain 12B (172 aa).

Basic residues predominate over residues 1-16 (MSSKKAKTKTTKKRPQ). The disordered stretch occupies residues 1-20 (MSSKKAKTKTTKKRPQRATS). Thr19 carries the phosphothreonine; by MLCK and ZIPK/DAPK3 modification. Ser20 bears the Phosphoserine; by MLCK and ZIPK/DAPK3 mark. EF-hand domains lie at 29–64 (SQIQ…LGKN), 98–133 (DPED…MGDR), and 134–169 (FTDE…GAKD). Residues Asp42, Asn44, Asp46, and Asp53 each coordinate Ca(2+).

In terms of assembly, myosin is a hexamer of 2 heavy chains and 4 light chains: interacts with myosin heavy chain MYO19. In terms of processing, phosphorylation increases the actin-activated myosin ATPase activity and thereby regulates the contractile activity. It is required to generate the driving force in the migration of the cells but not necessary for localization of myosin-2 at the leading edge. Phosphorylation is reduced following epigallocatechin-3-O-gallate treatment. In terms of tissue distribution, ubiquitously expressed in various hematopoietic cells.

Functionally, myosin regulatory subunit that plays an important role in regulation of both smooth muscle and nonmuscle cell contractile activity via its phosphorylation. Phosphorylation triggers actin polymerization in vascular smooth muscle. Implicated in cytokinesis, receptor capping, and cell locomotion. This is Myosin regulatory light chain 12B (MYL12B) from Homo sapiens (Human).